Reading from the N-terminus, the 351-residue chain is Cytochrome c biogenesis protein CcsA (351 aa).

The next 8 helical transmembrane spans lie at V17 to I37, N38 to A58, L68 to I88, L97 to L117, M143 to I163, I259 to N279, W286 to L306, and A320 to L340.

Belongs to the CcmF/CycK/Ccl1/NrfE/CcsA family. In terms of assembly, may interact with ccs1.

The protein localises to the cellular thylakoid membrane. In terms of biological role, required during biogenesis of c-type cytochromes (cytochrome c6 and cytochrome f) at the step of heme attachment. The polypeptide is Cytochrome c biogenesis protein CcsA (Trichormus variabilis (strain ATCC 29413 / PCC 7937) (Anabaena variabilis)).